Here is a 541-residue protein sequence, read N- to C-terminus: Chaperonin GroEL 2 (541 aa).

ATP contacts are provided by residues Thr29 to Pro32, Asp86 to Thr90, Gly413, and Asp492.

This sequence belongs to the chaperonin (HSP60) family. Forms a cylinder of 14 subunits composed of two heptameric rings stacked back-to-back. Interacts with the co-chaperonin GroES.

The protein resides in the cytoplasm. It carries out the reaction ATP + H2O + a folded polypeptide = ADP + phosphate + an unfolded polypeptide.. In terms of biological role, together with its co-chaperonin GroES, plays an essential role in assisting protein folding. The GroEL-GroES system forms a nano-cage that allows encapsulation of the non-native substrate proteins and provides a physical environment optimized to promote and accelerate protein folding. In Acidothermus cellulolyticus (strain ATCC 43068 / DSM 8971 / 11B), this protein is Chaperonin GroEL 2.